The following is a 118-amino-acid chain: UPF0102 protein Francci3_3586 (118 aa).

It belongs to the UPF0102 family.

The polypeptide is UPF0102 protein Francci3_3586 (Frankia casuarinae (strain DSM 45818 / CECT 9043 / HFP020203 / CcI3)).